A 231-amino-acid chain; its full sequence is Large ribosomal subunit protein uL1 (231 aa).

This sequence belongs to the universal ribosomal protein uL1 family. Part of the 50S ribosomal subunit.

Functionally, binds directly to 23S rRNA. The L1 stalk is quite mobile in the ribosome, and is involved in E site tRNA release. Its function is as follows. Protein L1 is also a translational repressor protein, it controls the translation of the L11 operon by binding to its mRNA. The polypeptide is Large ribosomal subunit protein uL1 (Pseudomonas savastanoi pv. phaseolicola (strain 1448A / Race 6) (Pseudomonas syringae pv. phaseolicola (strain 1448A / Race 6))).